The following is a 178-amino-acid chain: C-phycoerythrin class 2 subunit beta (178 aa).

Phycourobilin is bound by residues Cys-50 and Cys-61. Cys-82 and Cys-159 together coordinate (2R,3E)-phycoerythrobilin.

It belongs to the phycobiliprotein family. In terms of assembly, heterodimer of an alpha and a beta chain. In terms of processing, contains two covalently linked phycoerythrobilin chromophores and one covalently linked phycourobilin chromophore.

The protein resides in the cellular thylakoid membrane. Functionally, light-harvesting photosynthetic bile pigment-protein from the phycobiliprotein complex. The chain is C-phycoerythrin class 2 subunit beta (mpeB) from Synechococcus sp. (strain WH8103).